A 113-amino-acid chain; its full sequence is Protein NATD1 (113 aa).

The N-acetyltransferase domain maps to 22–112; sequence EHDRRRRQFT…PLPQYLERLQ (91 aa).

This sequence belongs to the NATD1 family.

The protein is Protein NATD1 (NATD1) of Homo sapiens (Human).